The sequence spans 144 residues: UPF0547 protein C16orf87 homolog (144 aa).

The interval 33-112 is disordered; sequence HAKQSQRLPP…EEKEKQEKEV (80 aa). Residues 35-45 are compositionally biased toward polar residues; sequence KQSQRLPPTSE. Basic residues predominate over residues 50–62; it reads PKRRRTERIKRER. 2 stretches are compositionally biased toward basic and acidic residues: residues 63 to 74 and 99 to 112; these read IHTAVNRDLENR and KKHEEEKEKQEKEV. Positions 94-122 form a coiled coil; it reads KTATTKKHEEEKEKQEKEVDMYANLSDEK.

It belongs to the UPF0547 family.

This is UPF0547 protein C16orf87 homolog from Xenopus laevis (African clawed frog).